We begin with the raw amino-acid sequence, 145 residues long: uncharacterized protein (145 aa).

The N-terminal stretch at 1–23 (MSSSNLSSRKTRISAHFLDAAPA) is a signal peptide. Residues 123–140 (VLLLIIALVFLLFVAIFI) traverse the membrane as a helical segment.

It is found in the membrane. This is an uncharacterized protein from Archaeoglobus fulgidus (strain ATCC 49558 / DSM 4304 / JCM 9628 / NBRC 100126 / VC-16).